The chain runs to 417 residues: Type II methyltransferase M.Eco47II (417 aa).

The SAM-dependent MTase C5-type domain occupies 81–414; it reads YTVLELFAGA…KSVVHLLDKI (334 aa). The active site involves cysteine 153.

Belongs to the class I-like SAM-binding methyltransferase superfamily. C5-methyltransferase family.

The catalysed reaction is a 2'-deoxycytidine in DNA + S-adenosyl-L-methionine = a 5-methyl-2'-deoxycytidine in DNA + S-adenosyl-L-homocysteine + H(+). In terms of biological role, a methylase that recognizes the double-stranded sequence 5'-GGNCC-3', methylates C-? on both strands, and protects the DNA from cleavage by both the Eco47I and Eco47II endonucleases. This chain is Type II methyltransferase M.Eco47II, found in Escherichia coli.